Here is a 311-residue protein sequence, read N- to C-terminus: Cytosolic Fe-S cluster assembly factor Nubp1 homolog (311 aa).

The [4Fe-4S] cluster site is built by C9, C23, C26, and C32. 63-70 (GKGGVGKS) provides a ligand contact to ATP. [4Fe-4S] cluster-binding residues include C241 and C244.

This sequence belongs to the Mrp/NBP35 ATP-binding proteins family. NUBP1/NBP35 subfamily. Heterotetramer of 2 Nubp1 and 2 Nubp2 chains. Requires [4Fe-4S] cluster as cofactor.

It is found in the cytoplasm. Component of the cytosolic iron-sulfur (Fe/S) protein assembly (CIA) machinery. Required for maturation of extramitochondrial Fe-S proteins. The Nubp1-Nubp2 heterotetramer forms a Fe-S scaffold complex, mediating the de novo assembly of an Fe-S cluster and its transfer to target apoproteins. This chain is Cytosolic Fe-S cluster assembly factor Nubp1 homolog, found in Drosophila grimshawi (Hawaiian fruit fly).